Reading from the N-terminus, the 453-residue chain is Phenylalanine-4-hydroxylase (453 aa).

Ala2 is modified (N-acetylalanine). The residue at position 16 (Ser16) is a Phosphoserine; by PKA. An ACT domain is found at 36-114 (SLIFSLKEEV…TVHELSRDKE (79 aa)). His285, His290, and Glu330 together coordinate Fe cation.

The protein belongs to the biopterin-dependent aromatic amino acid hydroxylase family. Homodimer and homotetramer. Fe(2+) is required as a cofactor. In terms of processing, phosphorylation at Ser-16 increases basal activity and facilitates activation by the substrate phenylalanine.

It carries out the reaction (6R)-L-erythro-5,6,7,8-tetrahydrobiopterin + L-phenylalanine + O2 = (4aS,6R)-4a-hydroxy-L-erythro-5,6,7,8-tetrahydrobiopterin + L-tyrosine. It participates in amino-acid degradation; L-phenylalanine degradation; acetoacetate and fumarate from L-phenylalanine: step 1/6. With respect to regulation, N-terminal region of PAH is thought to contain allosteric binding sites for phenylalanine and to constitute an 'inhibitory' domain that regulates the activity of a catalytic domain in the C-terminal portion of the molecule. Catalyzes the hydroxylation of L-phenylalanine to L-tyrosine. This is Phenylalanine-4-hydroxylase (Pah) from Rattus norvegicus (Rat).